The primary structure comprises 325 residues: Bifunctional nuclease 1 (325 aa).

Residues 117–252 enclose the BFN domain; the sequence is CVHNNPQGGH…YLAYSDGMRV (136 aa). Residues 284-318 form the UVR domain; it reads TKEFNILSKMMQAVDEERYDEAAEWRDKLGQFRAK.

Belongs to the bifunctional nuclease family.

The protein resides in the nucleus. Bifunctional nuclease with both RNase and DNase activities. Involved in basal defense response. Participates in abscisic acid-derived callose deposition following infection by a necrotrophic pathogen. The chain is Bifunctional nuclease 1 (BBD1) from Arabidopsis thaliana (Mouse-ear cress).